The primary structure comprises 724 residues: Hyaluronan mediated motility receptor (724 aa).

2 disordered regions span residues 1–22 and 40–81; these read MSFP…PSPG and KSQR…QKND. At S20 the chain carries Phosphoserine. 2 stretches are compositionally biased toward basic and acidic residues: residues 46–60 and 70–81; these read QQKE…DKDT and KSSESKESQKND. Residues N133, N477, N567, and N588 are each glycosylated (N-linked (GlcNAc...) asparagine). A required for interaction with FAM83D region spans residues 365–546; it reads EEMVKEKNLF…ITDLQNQLKQ (182 aa). Hyaluronic acid-binding stretches follow at residues 635-645 and 657-666; these read KQKIKHVVKLK and KLRCQLAKKK. Position 703 is a phosphothreonine (T703).

As to quaternary structure, interacts with ANKRD26. Interacts with DYNLL1. Interacts with FAM83D/CHICA. As to expression, expressed in testis. Expressed in the breast.

Its subcellular location is the cell surface. It localises to the cytoplasm. The protein localises to the cytoskeleton. It is found in the spindle. In terms of biological role, receptor for hyaluronic acid (HA). Involved in cell motility. When hyaluronan binds to HMMR, the phosphorylation of a number of proteins, including PTK2/FAK1 occurs. May also be involved in cellular transformation and metastasis formation, and in regulating extracellular-regulated kinase (ERK) activity. May act as a regulator of adipogenisis. The polypeptide is Hyaluronan mediated motility receptor (HMMR) (Homo sapiens (Human)).